The chain runs to 86 residues: UPF0335 protein mll3968 (86 aa).

This sequence belongs to the UPF0335 family.

The protein is UPF0335 protein mll3968 of Mesorhizobium japonicum (strain LMG 29417 / CECT 9101 / MAFF 303099) (Mesorhizobium loti (strain MAFF 303099)).